We begin with the raw amino-acid sequence, 225 residues long: Imidazole glycerol phosphate synthase subunit HisH (225 aa).

A Glutamine amidotransferase type-1 domain is found at 3–225 (TIAIVDYGMG…LYRNFVDWQP (223 aa)). Cys-82 serves as the catalytic Nucleophile. Active-site residues include His-205 and Glu-207.

As to quaternary structure, heterodimer of HisH and HisF.

It localises to the cytoplasm. The enzyme catalyses 5-[(5-phospho-1-deoxy-D-ribulos-1-ylimino)methylamino]-1-(5-phospho-beta-D-ribosyl)imidazole-4-carboxamide + L-glutamine = D-erythro-1-(imidazol-4-yl)glycerol 3-phosphate + 5-amino-1-(5-phospho-beta-D-ribosyl)imidazole-4-carboxamide + L-glutamate + H(+). It carries out the reaction L-glutamine + H2O = L-glutamate + NH4(+). It functions in the pathway amino-acid biosynthesis; L-histidine biosynthesis; L-histidine from 5-phospho-alpha-D-ribose 1-diphosphate: step 5/9. Functionally, IGPS catalyzes the conversion of PRFAR and glutamine to IGP, AICAR and glutamate. The HisH subunit catalyzes the hydrolysis of glutamine to glutamate and ammonia as part of the synthesis of IGP and AICAR. The resulting ammonia molecule is channeled to the active site of HisF. This chain is Imidazole glycerol phosphate synthase subunit HisH, found in Bordetella pertussis (strain Tohama I / ATCC BAA-589 / NCTC 13251).